We begin with the raw amino-acid sequence, 303 residues long: Nod factor export ATP-binding protein I (303 aa).

In terms of domain architecture, ABC transporter spans 5-235 (LQMRNVRKLY…EIGCDVVEVY (231 aa)). Residue 37 to 44 (GPNGAGKT) coordinates ATP.

This sequence belongs to the ABC transporter superfamily. Lipooligosaccharide exporter (TC 3.A.1.102) family. In terms of assembly, the complex is composed of two ATP-binding proteins (NodI) and two transmembrane proteins (NodJ).

It is found in the cell inner membrane. Part of the ABC transporter complex NodIJ involved in the export of the nodulation factors (Nod factors), the bacterial signal molecules that induce symbiosis and subsequent nodulation induction. Nod factors are LCO (lipo-chitin oligosaccharide), a modified beta-1,4-linked N-acetylglucosamine oligosaccharide. This subunit is responsible for energy coupling to the transport system. The protein is Nod factor export ATP-binding protein I of Cupriavidus metallidurans (strain ATCC 43123 / DSM 2839 / NBRC 102507 / CH34) (Ralstonia metallidurans).